A 295-amino-acid chain; its full sequence is Fatty acyl-CoA reductase (295 aa).

21 to 28 serves as a coordination point for NADP(+); that stretch reads TGASSGIG. A substrate-binding site is contributed by Ser153. The Proton acceptor role is filled by Tyr166.

This sequence belongs to the short-chain dehydrogenases/reductases (SDR) family.

It carries out the reaction hexadecanal + NADP(+) + CoA = hexadecanoyl-CoA + NADPH + H(+). Functionally, catalyzes the NADPH-dependent reduction of long chain acyl-CoA (with chain lengths of 14 to 22 carbons) to the corresponding aldehyde. This chain is Fatty acyl-CoA reductase (acr1), found in Acinetobacter baylyi (strain ATCC 33305 / BD413 / ADP1).